Here is a 469-residue protein sequence, read N- to C-terminus: 3-isopropylmalate dehydratase large subunit (469 aa).

[4Fe-4S] cluster contacts are provided by cysteine 347, cysteine 408, and cysteine 411.

It belongs to the aconitase/IPM isomerase family. LeuC type 1 subfamily. In terms of assembly, heterodimer of LeuC and LeuD. The cofactor is [4Fe-4S] cluster.

The enzyme catalyses (2R,3S)-3-isopropylmalate = (2S)-2-isopropylmalate. It functions in the pathway amino-acid biosynthesis; L-leucine biosynthesis; L-leucine from 3-methyl-2-oxobutanoate: step 2/4. Functionally, catalyzes the isomerization between 2-isopropylmalate and 3-isopropylmalate, via the formation of 2-isopropylmaleate. The protein is 3-isopropylmalate dehydratase large subunit of Actinobacillus pleuropneumoniae serotype 7 (strain AP76).